The primary structure comprises 559 residues: Oxygen-dependent choline dehydrogenase (559 aa).

4 to 33 (DYIIIGAGSAGNVLAARLTEESDVSVLLLE) is an FAD binding site. The segment at 182–202 (EGFGPMDRTVTPKGRRASTAR) is disordered. Catalysis depends on His-471, which acts as the Proton acceptor.

It belongs to the GMC oxidoreductase family. FAD is required as a cofactor.

The enzyme catalyses choline + A = betaine aldehyde + AH2. It carries out the reaction betaine aldehyde + NAD(+) + H2O = glycine betaine + NADH + 2 H(+). It participates in amine and polyamine biosynthesis; betaine biosynthesis via choline pathway; betaine aldehyde from choline (cytochrome c reductase route): step 1/1. In terms of biological role, involved in the biosynthesis of the osmoprotectant glycine betaine. Catalyzes the oxidation of choline to betaine aldehyde and betaine aldehyde to glycine betaine at the same rate. The sequence is that of Oxygen-dependent choline dehydrogenase from Pectobacterium atrosepticum (strain SCRI 1043 / ATCC BAA-672) (Erwinia carotovora subsp. atroseptica).